The sequence spans 432 residues: Adenylosuccinate synthetase (432 aa).

GTP-binding positions include 13–19 (GDEGKGK) and 41–43 (GHT). Residue D14 is the Proton acceptor of the active site. Residues D14 and G41 each contribute to the Mg(2+) site. IMP-binding positions include 14-17 (DEGK), 39-42 (NAGH), T130, R144, Q225, T240, and R304. Catalysis depends on H42, which acts as the Proton donor. Residue 300–306 (ATTGRKR) coordinates substrate. GTP is bound by residues R306, 332-334 (KLD), and 415-417 (STG).

It belongs to the adenylosuccinate synthetase family. As to quaternary structure, homodimer. The cofactor is Mg(2+).

Its subcellular location is the cytoplasm. It carries out the reaction IMP + L-aspartate + GTP = N(6)-(1,2-dicarboxyethyl)-AMP + GDP + phosphate + 2 H(+). It participates in purine metabolism; AMP biosynthesis via de novo pathway; AMP from IMP: step 1/2. Its function is as follows. Plays an important role in the de novo pathway of purine nucleotide biosynthesis. Catalyzes the first committed step in the biosynthesis of AMP from IMP. The polypeptide is Adenylosuccinate synthetase (Photobacterium profundum (strain SS9)).